We begin with the raw amino-acid sequence, 303 residues long: tRNA dimethylallyltransferase (303 aa).

Residue 12 to 19 (GPTGVGKT) coordinates ATP. Substrate is bound at residue 14 to 19 (TGVGKT). The segment at 37–40 (DSAQ) is interaction with substrate tRNA.

It belongs to the IPP transferase family. Monomer. The cofactor is Mg(2+).

The catalysed reaction is adenosine(37) in tRNA + dimethylallyl diphosphate = N(6)-dimethylallyladenosine(37) in tRNA + diphosphate. Functionally, catalyzes the transfer of a dimethylallyl group onto the adenine at position 37 in tRNAs that read codons beginning with uridine, leading to the formation of N6-(dimethylallyl)adenosine (i(6)A). In Fusobacterium nucleatum subsp. nucleatum (strain ATCC 25586 / DSM 15643 / BCRC 10681 / CIP 101130 / JCM 8532 / KCTC 2640 / LMG 13131 / VPI 4355), this protein is tRNA dimethylallyltransferase.